Reading from the N-terminus, the 372-residue chain is Peptide chain release factor 2 (372 aa).

Q253 is subject to N5-methylglutamine.

The protein belongs to the prokaryotic/mitochondrial release factor family. Methylated by PrmC. Methylation increases the termination efficiency of RF2.

Its subcellular location is the cytoplasm. In terms of biological role, peptide chain release factor 2 directs the termination of translation in response to the peptide chain termination codons UGA and UAA. This is Peptide chain release factor 2 from Mycolicibacterium gilvum (strain PYR-GCK) (Mycobacterium gilvum (strain PYR-GCK)).